The sequence spans 681 residues: Calpain-C (681 aa).

Residues Leu-18 to Asp-331 enclose the Calpain catalytic domain. Residues Thr-332–Ser-481 form a domain III region. Residues Cys-482–Cys-514 are linker. The domain IV stretch occupies residues Gln-515–Cys-681. Positions Ala-552–Trp-587 constitute an EF-hand domain. Positions 565, 567, 569, and 571 each coordinate Ca(2+).

This sequence belongs to the peptidase C2 family. As to expression, localized to the salivary glands in the larva.

Its subcellular location is the cytoplasm. Its function is as follows. Not known; does not seem to have protease activity. This is Calpain-C from Drosophila melanogaster (Fruit fly).